The primary structure comprises 216 residues: Thiamine-phosphate synthase (216 aa).

Residues 41–45 (QYREK) and Asn73 contribute to the 4-amino-2-methyl-5-(diphosphooxymethyl)pyrimidine site. Residues Asp74 and Asp93 each coordinate Mg(2+). Ser111 lines the 4-amino-2-methyl-5-(diphosphooxymethyl)pyrimidine pocket. 2-[(2R,5Z)-2-carboxy-4-methylthiazol-5(2H)-ylidene]ethyl phosphate is bound at residue 137–139 (TTT). Lys140 is a binding site for 4-amino-2-methyl-5-(diphosphooxymethyl)pyrimidine. Residues Gly168 and 188 to 189 (VS) each bind 2-[(2R,5Z)-2-carboxy-4-methylthiazol-5(2H)-ylidene]ethyl phosphate.

It belongs to the thiamine-phosphate synthase family. Mg(2+) is required as a cofactor.

The catalysed reaction is 2-[(2R,5Z)-2-carboxy-4-methylthiazol-5(2H)-ylidene]ethyl phosphate + 4-amino-2-methyl-5-(diphosphooxymethyl)pyrimidine + 2 H(+) = thiamine phosphate + CO2 + diphosphate. It carries out the reaction 2-(2-carboxy-4-methylthiazol-5-yl)ethyl phosphate + 4-amino-2-methyl-5-(diphosphooxymethyl)pyrimidine + 2 H(+) = thiamine phosphate + CO2 + diphosphate. It catalyses the reaction 4-methyl-5-(2-phosphooxyethyl)-thiazole + 4-amino-2-methyl-5-(diphosphooxymethyl)pyrimidine + H(+) = thiamine phosphate + diphosphate. It functions in the pathway cofactor biosynthesis; thiamine diphosphate biosynthesis; thiamine phosphate from 4-amino-2-methyl-5-diphosphomethylpyrimidine and 4-methyl-5-(2-phosphoethyl)-thiazole: step 1/1. In terms of biological role, condenses 4-methyl-5-(beta-hydroxyethyl)thiazole monophosphate (THZ-P) and 2-methyl-4-amino-5-hydroxymethyl pyrimidine pyrophosphate (HMP-PP) to form thiamine monophosphate (TMP). The polypeptide is Thiamine-phosphate synthase (Chloroflexus aurantiacus (strain ATCC 29366 / DSM 635 / J-10-fl)).